The following is a 36-amino-acid chain: uncharacterized protein (36 aa).

This is an uncharacterized protein from Saccharomyces cerevisiae (strain ATCC 204508 / S288c) (Baker's yeast).